A 97-amino-acid chain; its full sequence is Co-chaperonin GroES (97 aa).

Belongs to the GroES chaperonin family. As to quaternary structure, heptamer of 7 subunits arranged in a ring. Interacts with the chaperonin GroEL.

Its subcellular location is the cytoplasm. Together with the chaperonin GroEL, plays an essential role in assisting protein folding. The GroEL-GroES system forms a nano-cage that allows encapsulation of the non-native substrate proteins and provides a physical environment optimized to promote and accelerate protein folding. GroES binds to the apical surface of the GroEL ring, thereby capping the opening of the GroEL channel. The chain is Co-chaperonin GroES from Stutzerimonas stutzeri (strain A1501) (Pseudomonas stutzeri).